Consider the following 384-residue polypeptide: Sialyltransferase-like protein 3 (384 aa).

Residues 1 to 5 (MKRRH) are Cytoplasmic-facing. The chain crosses the membrane as a helical; Signal-anchor for type II membrane protein span at residues 6–26 (WSHPSCGLLLLVAVFCLLLVF). Residues 27-384 (RCSQLRHSGD…FRLPPVSFYR (358 aa)) lie on the Lumenal side of the membrane. Residue N241 is glycosylated (N-linked (GlcNAc...) asparagine).

It belongs to the glycosyltransferase 29 family.

It is found in the golgi apparatus membrane. Possesses sialyltransferase-like activity in vitro. Transfers sialic acid to the glycoprotein asialofetuin. The transferred sialic acid is linked to galactose of Gal-beta-1,3-GalNAc through alpha-2,6-linkage. The sequence is that of Sialyltransferase-like protein 3 from Oryza sativa subsp. indica (Rice).